The chain runs to 535 residues: L-aspartate oxidase (535 aa).

Residues 16-19 (SGAA), lysine 38, 45-52 (ATFYAQGG), and aspartate 223 contribute to the FAD site. Arginine 290 functions as the Proton donor/acceptor in the catalytic mechanism. FAD is bound by residues glutamate 375 and 391 to 392 (SL).

The protein belongs to the FAD-dependent oxidoreductase 2 family. NadB subfamily. FAD is required as a cofactor.

It localises to the cytoplasm. It carries out the reaction L-aspartate + O2 = iminosuccinate + H2O2. Its pathway is cofactor biosynthesis; NAD(+) biosynthesis; iminoaspartate from L-aspartate (oxidase route): step 1/1. Catalyzes the oxidation of L-aspartate to iminoaspartate, the first step in the de novo biosynthesis of NAD(+). This chain is L-aspartate oxidase (nadB), found in Vibrio cholerae serotype O1 (strain ATCC 39315 / El Tor Inaba N16961).